A 187-amino-acid polypeptide reads, in one-letter code: Ribulose bisphosphate carboxylase small subunit, chloroplastic (187 aa).

The transit peptide at 1–56 (MASSVMSTATVATGANAAQASMIASFNGLKSAASFPVTRKQDLDITSIASNGGRVE) directs the protein to the chloroplast.

It belongs to the RuBisCO small chain family. Heterohexadecamer of 8 large and 8 small subunits.

Its subcellular location is the plastid. It localises to the chloroplast. Its function is as follows. RuBisCO catalyzes two reactions: the carboxylation of D-ribulose 1,5-bisphosphate, the primary event in carbon dioxide fixation, as well as the oxidative fragmentation of the pentose substrate. Both reactions occur simultaneously and in competition at the same active site. Although the small subunit is not catalytic it is essential for maximal activity. In Capsicum annuum (Capsicum pepper), this protein is Ribulose bisphosphate carboxylase small subunit, chloroplastic.